We begin with the raw amino-acid sequence, 1621 residues long: Lysophospholipase NTE1 (1621 aa).

Topologically, residues 1 to 12 (MSSIPTPPDANG) are cytoplasmic. Residues 13-33 (NPLIALAVAVIYAILYVLQGV) form a helical membrane-spanning segment. Topologically, residues 34–59 (KYGVSLLTIGIPSCIVRMLQYSLTIS) are lumenal. Residues 60-80 (LGFPHLLALFAGALLALFFLI) traverse the membrane as a helical segment. The Cytoplasmic portion of the chain corresponds to 81–1621 (RYRYLTRYAQ…RGNRLRRMSI (1541 aa)). 7 disordered regions span residues 188-209 (PDAS…TRPS), 250-379 (EGEE…SVPR), 545-566 (QTAT…LDET), 648-667 (WNLN…QRDD), 711-735 (VSAL…GSTR), 772-791 (DDEA…GASG), and 839-870 (FRST…ERPF). Composition is skewed to low complexity over residues 195-209 (TPTP…TRPS) and 348-361 (RRSQ…RLNS). A nucleoside 3',5'-cyclic phosphate-binding positions include 788 to 907 (GASG…GYLS) and 951 to 1070 (RLLS…IAGR). The span at 839–867 (FRSTSSNQENPNSTPGSKHRQSSFGSSNE) shows a compositional bias: polar residues. In terms of domain architecture, PNPLA spans 1316 to 1480 (LVLGGGGARG…MDNTPIQPLR (165 aa)). Residues 1320 to 1325 (GGGARG) carry the GXGXXG motif. Residues 1347–1351 (GCSIG) carry the GXSXG motif. Ser1349 acts as the Nucleophile in catalysis. Residue Asp1467 is the Proton acceptor of the active site. The DGA/G signature appears at 1467 to 1469 (DGG).

Belongs to the NTE family.

The protein resides in the endoplasmic reticulum membrane. The catalysed reaction is a 1-acyl-sn-glycero-3-phosphocholine + H2O = sn-glycerol 3-phosphocholine + a fatty acid + H(+). Its activity is regulated as follows. Inhibited by organophosphorus esters. Intracellular phospholipase B that catalyzes the double deacylation of phosphatidylcholine (PC) to glycerophosphocholine (GroPCho). Plays an important role in membrane lipid homeostasis. Responsible for the rapid PC turnover in response to inositol, elevated temperatures, or when choline is present in the growth medium. The chain is Lysophospholipase NTE1 (NTE1) from Cryptococcus neoformans var. neoformans serotype D (strain B-3501A) (Filobasidiella neoformans).